Consider the following 480-residue polypeptide: Protein nucleotidyltransferase YdiU (480 aa).

ATP-binding residues include Gly-87, Gly-89, Arg-90, Lys-110, Asp-122, Gly-123, Arg-173, and Arg-180. Asp-245 functions as the Proton acceptor in the catalytic mechanism. Residues Asn-246 and Asp-255 each coordinate Mg(2+). Asp-255 contributes to the ATP binding site.

Belongs to the SELO family. Mg(2+) serves as cofactor. The cofactor is Mn(2+).

The enzyme catalyses L-seryl-[protein] + ATP = 3-O-(5'-adenylyl)-L-seryl-[protein] + diphosphate. It carries out the reaction L-threonyl-[protein] + ATP = 3-O-(5'-adenylyl)-L-threonyl-[protein] + diphosphate. The catalysed reaction is L-tyrosyl-[protein] + ATP = O-(5'-adenylyl)-L-tyrosyl-[protein] + diphosphate. It catalyses the reaction L-histidyl-[protein] + UTP = N(tele)-(5'-uridylyl)-L-histidyl-[protein] + diphosphate. The enzyme catalyses L-seryl-[protein] + UTP = O-(5'-uridylyl)-L-seryl-[protein] + diphosphate. It carries out the reaction L-tyrosyl-[protein] + UTP = O-(5'-uridylyl)-L-tyrosyl-[protein] + diphosphate. Functionally, nucleotidyltransferase involved in the post-translational modification of proteins. It can catalyze the addition of adenosine monophosphate (AMP) or uridine monophosphate (UMP) to a protein, resulting in modifications known as AMPylation and UMPylation. This is Protein nucleotidyltransferase YdiU from Jannaschia sp. (strain CCS1).